The sequence spans 657 residues: Probable Xaa-Pro aminopeptidase P (657 aa).

The Mn(2+) site is built by aspartate 453, aspartate 464, glutamate 562, and glutamate 576.

Belongs to the peptidase M24B family. Mn(2+) serves as cofactor.

The catalysed reaction is Release of any N-terminal amino acid, including proline, that is linked to proline, even from a dipeptide or tripeptide.. Functionally, catalyzes the removal of a penultimate prolyl residue from the N-termini of peptides. This chain is Probable Xaa-Pro aminopeptidase P (ampp), found in Talaromyces marneffei (strain ATCC 18224 / CBS 334.59 / QM 7333) (Penicillium marneffei).